We begin with the raw amino-acid sequence, 523 residues long: MNNSTSAGVYANGNDNKKFKGDRPPCSPSRVLHLRKIPCDVTEAEVISLGLPFGKVTNLLMLKGKSQAFLEMASEEAAVTMINYYTPVTPHLRSQPVYIQYSNHRELKTDNLPNQARAQAALQAVSAVQSGNLSLPGATSNEGTLLPGQSPVLRIIIENLFYPVTLEVLHQIFSKFGTVLKIITFTKNNQFQALLQYADPVNAQYAKMALDGQNIYNACCTLRIDFSKLTSLNVKYNNDKSRDFTRLDLPTGDGQPSLEPPMAAAFGAPGIMSSPYAGAAGFAPAIAFPQAAGLSVSAVPGALGPLTLTSSAVSGRMAIPGASGIPGNSVLLVTNLNPDFITPHGLFILFGVYGDVHRVKIMFNKKENALVQMADASQAQIAMNHLSGQRLYGKVLRATLSKHQAVQLPREGQEDQGLTKDFSNSPLHRFKKPGSKNFQNIFPPSATLHLSNIPPSVTMDDLKNLFTEAGCSVKAFKFFQKDRKMALIQLGSVEEAIQALIELHNHDLGENHHLRVSFSKSTI.

The segment at 1-25 (MNNSTSAGVYANGNDNKKFKGDRPP) is disordered. RRM domains are found at residues 30–114 (RVLH…NLPN), 153–229 (LRII…FSKL), and 329–403 (SVLL…LSKH). K36 is covalently cross-linked (Glycyl lysine isopeptide (Lys-Gly) (interchain with G-Cter in SUMO2)). Position 98 is a phosphotyrosine (Y98). T109 is modified (phosphothreonine). K187 is covalently cross-linked (Glycyl lysine isopeptide (Lys-Gly) (interchain with G-Cter in SUMO2)). K394 is subject to N6-acetyllysine. Positions 406–426 (VQLPREGQEDQGLTKDFSNSP) are disordered. S425 carries the post-translational modification Phosphoserine. The RRM 4 domain maps to 446–521 (ATLHLSNIPP…HHLRVSFSKS (76 aa)).

Interacts with THBS4 (via the acidic amphipathic C-terminus). Detected specifically in spleen, thymus, lungs, and bone marrow.

Functionally, RNA-binding protein that mediates pre-mRNA alternative splicing regulation. Plays a role in the regulation of cell proliferation, differentiation and migration. Positive regulator of EPO-dependent erythropoiesis. Participates in cell differentiation regulation by repressing tissue-specific exons. Promotes Fas exon 6 skipping. Binds RNA, preferentially to both poly(G) and poly(U). In Rattus norvegicus (Rat), this protein is Polypyrimidine tract-binding protein 3 (Ptbp3).